The chain runs to 88 residues: Small capsomere-interacting protein (88 aa).

Positions 1 to 30 (MTTIRSDDLSNQITQISGSSKKEEEKKKQQ) are disordered. Over residues 9–19 (LSNQITQISGS) the composition is skewed to polar residues.

Belongs to the herpesviridae small capsomere-interacting protein family. Interacts with the major capsid protein/MCP.

The protein localises to the virion. The protein resides in the host nucleus. Functionally, participates in the assembly of the infectious particles by decorating the outer surface of the capsid shell and thus forming a layer between the capsid and the tegument. Complexes composed of the major capsid protein and small capsomere-interacting protein/SCP assemble together in the host cytoplasm and are translocated to the nucleus, where they accumulate and participate in capsid assembly. The protein is Small capsomere-interacting protein of Human herpesvirus 6A (strain Uganda-1102) (HHV-6 variant A).